A 421-amino-acid chain; its full sequence is Ankyrin repeat and SOCS box protein 6 (421 aa).

ANK repeat units follow at residues 67 to 97 (EGVSNALLKMAELGLTRAADVLLRHGANLNF), 102 to 131 (TYYTALHIAVLRNQPDMVELLVHHGADVNR), 136 to 166 (HESSPLDLASEEPERLPCLQRLLDLGADVNA), 170 to 205 (HGKTALLHALASSDGVQIHNTENIRLLLEGGADVKA), 226 to 255 (GGDKEEAQMINRFCFQVTRLLLAHGADPSE), and 260 to 289 (ESLTHICLKSFKLHFPLLRFLLESGAAYNC). One can recognise an SOCS box domain in the interval 360–415 (ALHFSLRQLESYPPPLKHLCRVAIRLYLQPWPVDVKVKALPLPDRLKWYLLSEHSG).

The protein belongs to the ankyrin SOCS box (ASB) family. As to quaternary structure, binds APS. Identified in a complex with ELOB and ELOC. Interacts with CUL5 and RNF7. Interacts with SQSTM1. In terms of processing, ubiquitinated by RNF41; leading to proteasomal degradation.

The protein localises to the cytoplasm. The protein operates within protein modification; protein ubiquitination. Its function is as follows. Probable substrate-recognition component of a SCF-like ECS (Elongin-Cullin-SOCS-box protein) E3 ubiquitin-protein ligase complex which mediates the ubiquitination and subsequent proteasomal degradation of target proteins. May play a role in the regulation of cell proliferation and autophagy by promoting the ubiquitination and degradation of SQSTM1. The protein is Ankyrin repeat and SOCS box protein 6 (ASB6) of Homo sapiens (Human).